Here is a 594-residue protein sequence, read N- to C-terminus: Trehalase (594 aa).

Residues 1 to 27 (MDFLNKKIQKILFICILSFLIVNLTKS) form the signal peptide. Residues asparagine 56, asparagine 70, asparagine 97, and asparagine 166 are each glycosylated (N-linked (GlcNAc...) asparagine). Residues arginine 190, 197–198 (WD), and asparagine 234 each bind substrate. N-linked (GlcNAc...) asparagine glycosylation occurs at asparagine 242. 243-245 (RSQ) is a substrate binding site. Asparagine 261 and asparagine 305 each carry an N-linked (GlcNAc...) asparagine glycan. Substrate is bound by residues 312 to 314 (RPE) and glycine 346. Aspartate 348 (proton donor/acceptor) is an active-site residue. Asparagine 361, asparagine 395, asparagine 513, and asparagine 537 each carry an N-linked (GlcNAc...) asparagine glycan. Catalysis depends on glutamate 549, which acts as the Proton donor/acceptor. Glutamate 564 is a binding site for substrate.

This sequence belongs to the glycosyl hydrolase 37 family.

The enzyme catalyses alpha,alpha-trehalose + H2O = alpha-D-glucose + beta-D-glucose. The chain is Trehalase (treh) from Dictyostelium discoideum (Social amoeba).